We begin with the raw amino-acid sequence, 230 residues long: Complex I assembly factor TMEM126B, mitochondrial (230 aa).

Ser34 carries the phosphoserine modification. 4 consecutive transmembrane segments (helical) span residues 72–92, 110–130, 141–161, and 199–219; these read IYQMATFGTTAGFSGIFSNFL, LATLPFLSTVVTDKLFVIDAL, VFRSSLIGIVCGVFYPSSLAF, and IPLVFQIMFGILNGLYHYAVF.

It belongs to the TMEM126 family. In terms of assembly, part of the mitochondrial complex I assembly/MCIA complex that comprises at least the core subunits TMEM126B, NDUFAF1, ECSIT and ACAD9 and complement subunits such as COA1 and TMEM186. Associates with the intermediate 370 kDa subcomplex of incompletely assembled complex I. Interacts with TMEM70.

The protein resides in the mitochondrion membrane. In terms of biological role, as part of the MCIA complex, involved in the assembly of the mitochondrial complex I. Participates in constructing the membrane arm of complex I. This chain is Complex I assembly factor TMEM126B, mitochondrial, found in Homo sapiens (Human).